We begin with the raw amino-acid sequence, 337 residues long: Putative NAC domain-containing protein 94 (337 aa).

Residues 20-191 (VLPGFRFHPT…AWAICRIFKK (172 aa)) form the NAC domain.

It is found in the nucleus. The polypeptide is Putative NAC domain-containing protein 94 (ANAC094) (Arabidopsis thaliana (Mouse-ear cress)).